Here is a 392-residue protein sequence, read N- to C-terminus: Galactokinase (392 aa).

Arg37, Glu43, His44, and Asp46 together coordinate alpha-D-galactose. ATP-binding residues include Gly136, Gly138, Ser140, and Ser141. Asp186 is an alpha-D-galactose binding site. The active-site Proton acceptor is the Asp186. Ser230 carries the phosphoserine modification. An alpha-D-galactose-binding site is contributed by Tyr236.

The protein belongs to the GHMP kinase family. GalK subfamily. As to quaternary structure, homodimer.

It carries out the reaction alpha-D-galactose + ATP = alpha-D-galactose 1-phosphate + ADP + H(+). It functions in the pathway carbohydrate metabolism; galactose metabolism. Its function is as follows. Catalyzes the transfer of a phosphate from ATP to alpha-D-galactose and participates in the first committed step in the catabolism of galactose. The protein is Galactokinase (Galk1) of Mus musculus (Mouse).